We begin with the raw amino-acid sequence, 199 residues long: NAD(P)H dehydrogenase (quinone) (199 aa).

The Flavodoxin-like domain maps to 4–190 (VLVLYYSTYG…EGARHQGELI (187 aa)). Residues 10 to 15 (STYGHV) and 78 to 80 (TRF) contribute to the FMN site. Residue tyrosine 12 coordinates NAD(+). Tryptophan 98 contributes to the substrate binding site. FMN-binding positions include 113-119 (STATQHG) and histidine 134.

The protein belongs to the WrbA family. The cofactor is FMN.

It carries out the reaction a quinone + NADH + H(+) = a quinol + NAD(+). The catalysed reaction is a quinone + NADPH + H(+) = a quinol + NADP(+). This Cupriavidus metallidurans (strain ATCC 43123 / DSM 2839 / NBRC 102507 / CH34) (Ralstonia metallidurans) protein is NAD(P)H dehydrogenase (quinone).